Reading from the N-terminus, the 408-residue chain is LL-diaminopimelate aminotransferase (408 aa).

Tyrosine 15 and glycine 42 together coordinate substrate. Residues tyrosine 72, 108–109 (SK), tyrosine 132, asparagine 187, tyrosine 218, and 246–248 (SFS) each bind pyridoxal 5'-phosphate. Residues lysine 109, tyrosine 132, and asparagine 187 each contribute to the substrate site. At lysine 249 the chain carries N6-(pyridoxal phosphate)lysine. Residues arginine 257 and asparagine 292 each contribute to the pyridoxal 5'-phosphate site. Asparagine 292 and arginine 388 together coordinate substrate.

It belongs to the class-I pyridoxal-phosphate-dependent aminotransferase family. LL-diaminopimelate aminotransferase subfamily. As to quaternary structure, homodimer. Requires pyridoxal 5'-phosphate as cofactor.

It catalyses the reaction (2S,6S)-2,6-diaminopimelate + 2-oxoglutarate = (S)-2,3,4,5-tetrahydrodipicolinate + L-glutamate + H2O + H(+). The protein operates within amino-acid biosynthesis; L-lysine biosynthesis via DAP pathway; LL-2,6-diaminopimelate from (S)-tetrahydrodipicolinate (aminotransferase route): step 1/1. Its function is as follows. Involved in the synthesis of meso-diaminopimelate (m-DAP or DL-DAP), required for both lysine and peptidoglycan biosynthesis. Catalyzes the direct conversion of tetrahydrodipicolinate to LL-diaminopimelate. The sequence is that of LL-diaminopimelate aminotransferase from Synechococcus sp. (strain RCC307).